A 403-amino-acid polypeptide reads, in one-letter code: Putative glutamate--cysteine ligase 2 (403 aa).

A disordered region spans residues Glu370–His403.

Belongs to the glutamate--cysteine ligase type 2 family. YbdK subfamily.

It catalyses the reaction L-cysteine + L-glutamate + ATP = gamma-L-glutamyl-L-cysteine + ADP + phosphate + H(+). In terms of biological role, ATP-dependent carboxylate-amine ligase which exhibits weak glutamate--cysteine ligase activity. This chain is Putative glutamate--cysteine ligase 2, found in Bordetella avium (strain 197N).